Here is a 337-residue protein sequence, read N- to C-terminus: Cytoskeleton protein RodZ (337 aa).

Over 1-111 (MNTEATHDQN…LGKRRKKRDG (111 aa)) the chain is Cytoplasmic. The HTH cro/C1-type domain occupies 19–71 (LRNAREQLGLSQQAVAERLCLKVSTVRDIEEDKAPADLASTFLRGYIRSYARL). The segment at residues 30–49 (QQAVAERLCLKVSTVRDIEE) is a DNA-binding region (H-T-H motif). Residues 112–132 (WLMTFTWLVLFVVIGLSGAWW) traverse the membrane as a helical; Signal-anchor for type II membrane protein segment. The Periplasmic segment spans residues 133–337 (WQDHKAQQEE…TLNAEQSPAQ (205 aa)). Over residues 145–167 (TMADQSSAELSSNSEQGQSVPLN) the composition is skewed to polar residues. The segment at 145–236 (TMADQSSAEL…TAATTPDGAA (92 aa)) is disordered. Residues 168–207 (TSTTTDPATTSTPPASVDTTATNTQTPVVTAPAPAVDPQQ) are compositionally biased toward low complexity. The span at 208–218 (NAVVSPSQANV) shows a compositional bias: polar residues. Residues 219-236 (DTAATPAPTAATTPDGAA) show a composition bias toward low complexity.

The protein belongs to the RodZ family.

The protein resides in the cell inner membrane. Functionally, cytoskeletal protein that is involved in cell-shape control through regulation of the length of the long axis. This is Cytoskeleton protein RodZ from Escherichia coli O157:H7.